Consider the following 384-residue polypeptide: Aryl-alcohol dehydrogenase GME11368 (384 aa).

Residue Asp-69 participates in NADP(+) binding. The active-site Proton donor is Tyr-74. Residues 177 to 178, Gln-203, and 301 to 309 contribute to the NADP(+) site; these read SD and RKPEHLKAN.

Belongs to the aldo/keto reductase family. Aldo/keto reductase 2 subfamily.

It participates in secondary metabolite biosynthesis. In terms of biological role, aryl-alcohol dehydrogenase; part of the gene cluster that mediates the biosynthesis of dibenzodioxocinones such as pestalotiollide B, a novel class of inhibitors against cholesterol ester transfer protein (CEPT). The biosynthesis initiates from condensation of acetate and malonate units catalyzed by the non-reducing PKS pks8/GME11356. Pks8/GME11356 lacks a thioesterase (TE) domain, which is important to the cyclizing of the third ring of atrochrysone carboxylic acid, and the esterase GME11355 might play the role of TE and catalyzes the cyclization reaction of the C ring. The lactamase-like protein GME11357 (or other beta-lactamases in Pestalotiopsis microspora) probably hydrolyzes the thioester bond between the ACP of pks8/GME11356 and the intermediate to release atrochrysone carboxylic acid, which is spontaneously dehydrates to form endocrocin anthrone. Endocrocin anthrone is further converted to emodin via the endocrocin intermediate. Emodin is then oxidized by several enzymes such as the Baeyer-Villiger oxidase GME11358, the oxidoreductase GME11367, the short chain dehydrogenase/reductase GME11373, as well as by other oxidoreductases from the cluster, to modify the A and C rings and open the B ring, and finally yield monodictyphenone. The prenyltransferase GME11375 may catalyze the addition reaction between the C5 side chains and the carbon bone of dibenzodioxocinones. The remaining biochemical reactions to the final product dibenzodioxocinones should be methylation catalyzed by methyltransferase GME11366 and reduction and lactonization reaction catalyzed by a series of oxidordeuctases. The polypeptide is Aryl-alcohol dehydrogenase GME11368 (Pestalotiopsis microspora).